Here is a 402-residue protein sequence, read N- to C-terminus: CCA-adding enzyme (402 aa).

Positions 32 and 35 each coordinate ATP. CTP contacts are provided by glycine 32 and arginine 35. Aspartate 45 and aspartate 47 together coordinate Mg(2+). Residues arginine 116, aspartate 159, arginine 162, arginine 165, and arginine 168 each contribute to the ATP site. Residues arginine 116, aspartate 159, arginine 162, arginine 165, and arginine 168 each coordinate CTP.

The protein belongs to the tRNA nucleotidyltransferase/poly(A) polymerase family. Bacterial CCA-adding enzyme type 3 subfamily. Homodimer. The cofactor is Mg(2+).

It catalyses the reaction a tRNA precursor + 2 CTP + ATP = a tRNA with a 3' CCA end + 3 diphosphate. The catalysed reaction is a tRNA with a 3' CCA end + 2 CTP + ATP = a tRNA with a 3' CCACCA end + 3 diphosphate. Its function is as follows. Catalyzes the addition and repair of the essential 3'-terminal CCA sequence in tRNAs without using a nucleic acid template. Adds these three nucleotides in the order of C, C, and A to the tRNA nucleotide-73, using CTP and ATP as substrates and producing inorganic pyrophosphate. tRNA 3'-terminal CCA addition is required both for tRNA processing and repair. Also involved in tRNA surveillance by mediating tandem CCA addition to generate a CCACCA at the 3' terminus of unstable tRNAs. While stable tRNAs receive only 3'-terminal CCA, unstable tRNAs are marked with CCACCA and rapidly degraded. This Streptococcus pyogenes serotype M4 (strain MGAS10750) protein is CCA-adding enzyme.